A 385-amino-acid polypeptide reads, in one-letter code: S-adenosylmethionine synthase (385 aa).

ATP is bound at residue H16. D18 is a binding site for Mg(2+). Residue E44 coordinates K(+). The L-methionine site is built by E57 and Q100. Positions 100-110 (QSPDINQGVDR) are flexible loop. ATP-binding positions include 164 to 166 (DGK), 230 to 231 (KF), D239, 245 to 246 (RK), A262, and K266. Residue D239 participates in L-methionine binding. An L-methionine-binding site is contributed by K270.

It belongs to the AdoMet synthase family. As to quaternary structure, homotetramer; dimer of dimers. Mg(2+) is required as a cofactor. Requires K(+) as cofactor.

The protein localises to the cytoplasm. The catalysed reaction is L-methionine + ATP + H2O = S-adenosyl-L-methionine + phosphate + diphosphate. It functions in the pathway amino-acid biosynthesis; S-adenosyl-L-methionine biosynthesis; S-adenosyl-L-methionine from L-methionine: step 1/1. In terms of biological role, catalyzes the formation of S-adenosylmethionine (AdoMet) from methionine and ATP. The overall synthetic reaction is composed of two sequential steps, AdoMet formation and the subsequent tripolyphosphate hydrolysis which occurs prior to release of AdoMet from the enzyme. This chain is S-adenosylmethionine synthase, found in Helicobacter pylori (strain P12).